The following is an 87-amino-acid chain: uncharacterized protein (87 aa).

An N-terminal signal peptide occupies residues 1-26 (MMSTQHFILSLTILIIISNLHDEVNA). 3 disulfides stabilise this stretch: cysteine 61/cysteine 75, cysteine 68/cysteine 79, and cysteine 74/cysteine 84.

It is found in the secreted. This is an uncharacterized protein from Schistosoma japonicum (Blood fluke).